Consider the following 103-residue polypeptide: Cell division protein FtsB (103 aa).

Topologically, residues 1-3 (MGK) are cytoplasmic. Residues 4-21 (LTLLLLALLVWLQYSLWF) traverse the membrane as a helical segment. The Periplasmic segment spans residues 22-103 (GKNGIHDYSR…RAATAGQTHR (82 aa)). A coiled-coil region spans residues 33-62 (NDDVVAQQATNAKLKARNDQLFAEIDDLNG).

This sequence belongs to the FtsB family. Part of a complex composed of FtsB, FtsL and FtsQ.

It localises to the cell inner membrane. Essential cell division protein. May link together the upstream cell division proteins, which are predominantly cytoplasmic, with the downstream cell division proteins, which are predominantly periplasmic. The protein is Cell division protein FtsB of Salmonella agona (strain SL483).